Here is a 244-residue protein sequence, read N- to C-terminus: Small ribosomal subunit protein uS3 (244 aa).

Positions 39–110 (IRNFIQKKYS…QVRINVVEVE (72 aa)) constitute a KH type-2 domain. Residues 221-244 (GAIPRRKGSRKPQQFEDRSSNENS) form a disordered region. Positions 233 to 244 (QQFEDRSSNENS) are enriched in basic and acidic residues.

This sequence belongs to the universal ribosomal protein uS3 family. In terms of assembly, part of the 30S ribosomal subunit. Forms a tight complex with proteins S10 and S14.

Binds the lower part of the 30S subunit head. Binds mRNA in the 70S ribosome, positioning it for translation. This is Small ribosomal subunit protein uS3 from Prochlorococcus marinus (strain MIT 9515).